We begin with the raw amino-acid sequence, 347 residues long: LRP2-binding protein (347 aa).

A TPR repeat occupies 59–92; that stretch reads TLAYFLRGQLYFEEGWYEEALEQFEEIKEKDHQA. Sel1-like repeat units follow at residues 93–125, 133–168, 173–206, 207–242, 243–277, and 297–332; these read TYQL…DSPC, FAAA…DNGN, VKAQ…GNGN, LESQ…ERGN, VYAQ…EVHD, and AMAS…RLNP.

As to quaternary structure, interacts with LRP2.

It localises to the cytoplasm. Functionally, may act as an adapter that regulates LRP2 function. This is LRP2-binding protein (LRP2BP) from Homo sapiens (Human).